A 208-amino-acid chain; its full sequence is N-(5'-phosphoribosyl)anthranilate isomerase (208 aa).

Belongs to the TrpF family.

It carries out the reaction N-(5-phospho-beta-D-ribosyl)anthranilate = 1-(2-carboxyphenylamino)-1-deoxy-D-ribulose 5-phosphate. Its pathway is amino-acid biosynthesis; L-tryptophan biosynthesis; L-tryptophan from chorismate: step 3/5. The sequence is that of N-(5'-phosphoribosyl)anthranilate isomerase from Chlamydia trachomatis serovar A (strain ATCC VR-571B / DSM 19440 / HAR-13).